The primary structure comprises 890 residues: Probable LRR receptor-like serine/threonine-protein kinase At1g51860 (890 aa).

A signal peptide spans 1–23 (MKSLHWFLHLLIIAFTVLRSVEA). At 24–513 (QNQAGFISLD…KESKKVPMVA (490 aa)) the chain is on the extracellular side. N-linked (GlcNAc...) asparagine glycosylation is found at asparagine 49, asparagine 96, asparagine 142, asparagine 181, asparagine 256, asparagine 285, asparagine 289, asparagine 295, asparagine 312, asparagine 332, asparagine 340, asparagine 402, and asparagine 419. LRR repeat units follow at residues 412–435 (RIIS…SKLT), 436–458 (LLTV…FAEM), and 460–481 (SLKL…PDSL). N-linked (GlcNAc...) asparagine glycosylation is found at asparagine 465, asparagine 473, and asparagine 497. The helical transmembrane segment at 514 to 534 (IAASVAGVFALLVILAIFFVI) threads the bilayer. Over 535-890 (KRKNVKAHKS…STSDFAPGAR (356 aa)) the chain is Cytoplasmic. Position 575 is a phosphothreonine (threonine 575). Positions 584 to 856 (NNFERVLGKG…HVVMELNDCV (273 aa)) constitute a Protein kinase domain. ATP contacts are provided by residues 590 to 598 (LGKGGFGTV) and lysine 611. Tyrosine 656 carries the post-translational modification Phosphotyrosine. The Proton acceptor role is filled by aspartate 708. Residue serine 742 is modified to Phosphoserine. Phosphothreonine is present on residues threonine 743 and threonine 748. Tyrosine 756 carries the phosphotyrosine modification.

The protein belongs to the protein kinase superfamily. Ser/Thr protein kinase family.

It localises to the membrane. The enzyme catalyses L-seryl-[protein] + ATP = O-phospho-L-seryl-[protein] + ADP + H(+). It carries out the reaction L-threonyl-[protein] + ATP = O-phospho-L-threonyl-[protein] + ADP + H(+). In Arabidopsis thaliana (Mouse-ear cress), this protein is Probable LRR receptor-like serine/threonine-protein kinase At1g51860.